Reading from the N-terminus, the 476-residue chain is Probable pectin lyase F (476 aa).

Residues M1 to A20 form the signal peptide. C84 and C108 form a disulfide bridge. Residues N103 and N131 are each glycosylated (N-linked (GlcNAc...) asparagine). Residue R258 is part of the active site. N-linked (GlcNAc...) asparagine glycans are attached at residues N277 and N318. A disulfide bridge links C325 with C333. N-linked (GlcNAc...) asparagine glycosylation is present at N385. Positions F412 to Y476 are disordered. Positions V426–A453 are enriched in polar residues. Basic residues predominate over residues N465–Y476.

It belongs to the polysaccharide lyase 1 family.

Its subcellular location is the secreted. The catalysed reaction is Eliminative cleavage of (1-&gt;4)-alpha-D-galacturonan methyl ester to give oligosaccharides with 4-deoxy-6-O-methyl-alpha-D-galact-4-enuronosyl groups at their non-reducing ends.. Its function is as follows. Pectinolytic enzymes consist of four classes of enzymes: pectin lyase, polygalacturonase, pectin methylesterase and rhamnogalacturonase. Among pectinolytic enzymes, pectin lyase is the most important in depolymerization of pectin, since it cleaves internal glycosidic bonds of highly methylated pectins. This chain is Probable pectin lyase F (pelF), found in Aspergillus niger (strain ATCC MYA-4892 / CBS 513.88 / FGSC A1513).